Reading from the N-terminus, the 201-residue chain is Probable nicotinate-nucleotide adenylyltransferase (201 aa).

Belongs to the NadD family.

It catalyses the reaction nicotinate beta-D-ribonucleotide + ATP + H(+) = deamido-NAD(+) + diphosphate. The protein operates within cofactor biosynthesis; NAD(+) biosynthesis; deamido-NAD(+) from nicotinate D-ribonucleotide: step 1/1. Catalyzes the reversible adenylation of nicotinate mononucleotide (NaMN) to nicotinic acid adenine dinucleotide (NaAD). The sequence is that of Probable nicotinate-nucleotide adenylyltransferase from Clostridium botulinum (strain Kyoto / Type A2).